The chain runs to 765 residues: Transient receptor potential cation channel subfamily V member 6 (765 aa).

Residues 1-367 are Cytoplasmic-facing; the sequence is MGPLQGDGGP…SLKWKRYGRP (367 aa). ANK repeat units lie at residues 84–114, 118–147, and 156–185; these read IWES…KVHQ, MGET…ELVF, and EGQT…SVSA. The interval 133–143 is interaction with calmodulin; that stretch reads EAAMVLMEAAP. Tyr201 carries the post-translational modification Phosphotyrosine; by SRC. ANK repeat units lie at residues 202 to 231, 235 to 277, and 279 to 308; these read FGEH…DIRA, LGNT…LVPN, and QGLT…HTQW. A helical transmembrane segment spans residues 368-388; the sequence is YFCMLGAIYLLYIICFTMCCI. Residues 389 to 425 lie on the Extracellular side of the membrane; the sequence is YRPLKPRTNNRTSPRDNTLLQQKLLQEAYMTPKDDIR. Asn398 carries an N-linked (GlcNAc...) asparagine glycan. A helical transmembrane segment spans residues 426–448; it reads LVGELVTVIGAIIILLVEVPDIF. Over 449-463 the chain is Cytoplasmic; sequence RMGVTRFFGQTILGG. A helical transmembrane segment spans residues 464–483; that stretch reads PFHVLIITYAFMVLVTMVMR. Residues 484-489 lie on the Extracellular side of the membrane; the sequence is LISASG. Residues 490–509 traverse the membrane as a helical segment; sequence EVVPMSFALVLGWCNVMYFA. At 510 to 529 the chain is on the cytoplasmic side; sequence RGFQMLGPFTIMIQKMIFGD. Residues 530 to 552 traverse the membrane as a helical segment; that stretch reads LMRFCWLMAVVILGFASAFYIIF. Residues 553–565 are Extracellular-facing; sequence QTEDPEELGHFYD. The segment at residues 566 to 585 is an intramembrane region (pore-forming); it reads YPMALFSTFELFLTIIDGPA. The short motif at 581-585 is the Selectivity filter element; that stretch reads IDGPA. Asp582 contacts Ca(2+). The Extracellular segment spans residues 586 to 596; it reads NYNVDLPFMYS. The chain crosses the membrane as a helical span at residues 597–617; sequence ITYAAFAIIATLLMLNLLIAM. The Cytoplasmic segment spans residues 618 to 765; it reads MGDTHWRVAH…EDGESWEYQI (148 aa). The segment at 638–642 is interaction with S100A10; that stretch reads VATTV. Residues 731–751 are interaction with calmodulin; that stretch reads SSANWERLRQGTLRRDLRGII. Residue Thr742 is modified to Phosphothreonine; by PKC/PRKCA.

It belongs to the transient receptor (TC 1.A.4) family. TrpV subfamily. TRPV6 sub-subfamily. In terms of assembly, homotetramer. Probably also forms heterotetramers with TRPV5. Interacts with TRPV5. Interacts with S100A10 and probably with the ANAX2-S100A10 heterotetramer. The interaction with S100A10 is required for the trafficking to the plasma membrane. Interacts with BSPRY. Interacts with TCAF1 and TCAF2 isoform 2. Interacts with calmodulin. In terms of processing, glycosylated. Post-translationally, phosphorylation at Tyr-201 by SRC leads to an increased calcium influx through the channel. Probably dephosphorylated at this site by PTPN1. Phosphorylation by PRKCA at the calmodulin binding site delays channel inactivation. In terms of tissue distribution, expressed at high levels in the gastrointestinal tract, including esophagus, stomach, duodenum, jejunum, ileum and colon, and in pancreas, placenta, prostate and salivary gland. Expressed at moderate levels in liver, kidney and testis. Expressed in trophoblasts of placenta villus trees (at protein level). Expressed in locally advanced prostate cancer, metastatic and androgen-insensitive prostatic lesions but not detected in healthy prostate tissue and benign prostatic hyperplasia.

It localises to the cell membrane. The catalysed reaction is Ca(2+)(in) = Ca(2+)(out). Its function is as follows. Calcium selective cation channel that mediates Ca(2+) uptake in various tissues, including the intestine. Important for normal Ca(2+) ion homeostasis in the body, including bone and skin. The channel is activated by low internal calcium level, probably including intracellular calcium store depletion, and the current exhibits an inward rectification. Inactivation includes both a rapid Ca(2+)-dependent and a slower Ca(2+)-calmodulin-dependent mechanism; the latter may be regulated by phosphorylation. In vitro, is slowly inhibited by Mg(2+) in a voltage-independent manner. Heteromeric assembly with TRPV5 seems to modify channel properties. TRPV5-TRPV6 heteromultimeric concatemers exhibit voltage-dependent gating. This chain is Transient receptor potential cation channel subfamily V member 6 (TRPV6), found in Homo sapiens (Human).